A 213-amino-acid polypeptide reads, in one-letter code: Bcl-2-related ovarian killer protein (213 aa).

A BH4 motif is present at residues 32 to 44 (KALCRDYINSRLI). A BH3 motif is present at residues 67–83 (VSAILLRLGDELEYIRP). The BH1 motif lies at 113–132 (QIFTAGITWGKVVSLYAVAA). The BH2 signature appears at 165-179 (WLKRRGGWADITKCV). A helical transmembrane segment spans residues 190–210 (WLVAAVCSFGHFLKAIFFVLL).

The protein belongs to the Bcl-2 family.

It localises to the membrane. Functionally, may play a role in apoptosis. The sequence is that of Bcl-2-related ovarian killer protein from Gallus gallus (Chicken).